A 479-amino-acid polypeptide reads, in one-letter code: Hydrogenase-4 component D (479 aa).

Helical transmembrane passes span 3-23 (NLAL…SFSP), 30-50 (WGVL…SAFY), 55-75 (VAVT…LVID), 80-100 (LILF…TGYL), 117-137 (AFLL…TLLG), 168-188 (ALLI…TLFL), 208-228 (LVYG…PMQA), 238-258 (TPIS…YIFA), 270-290 (VIGG…FLMY), 300-320 (LAWS…LSIF), 330-350 (IAYI…AGAL), 369-389 (LPLP…VPPF), 390-410 (NGFF…VEYW), 411-431 (ILLP…AWFI), and 458-478 (LVLI…ATWL).

It belongs to the complex I subunit 5 family.

Its subcellular location is the cell inner membrane. Its function is as follows. Possible component of hydrogenase 4. This chain is Hydrogenase-4 component D, found in Escherichia coli (strain K12).